The chain runs to 135 residues: NADPH-dependent 7-cyano-7-deazaguanine reductase (135 aa).

Residue cysteine 48 is the Thioimide intermediate of the active site. Catalysis depends on aspartate 55, which acts as the Proton donor. Residues 70–72 and 89–90 each bind substrate; these read LEL and HE.

Belongs to the GTP cyclohydrolase I family. QueF type 1 subfamily.

It localises to the cytoplasm. It catalyses the reaction 7-aminomethyl-7-carbaguanine + 2 NADP(+) = 7-cyano-7-deazaguanine + 2 NADPH + 3 H(+). The protein operates within tRNA modification; tRNA-queuosine biosynthesis. Functionally, catalyzes the NADPH-dependent reduction of 7-cyano-7-deazaguanine (preQ0) to 7-aminomethyl-7-deazaguanine (preQ1). This is NADPH-dependent 7-cyano-7-deazaguanine reductase from Prochlorococcus marinus (strain SARG / CCMP1375 / SS120).